Here is an 82-residue protein sequence, read N- to C-terminus: Escargot/snail protein homolog (82 aa).

4 C2H2-type zinc fingers span residues 1-5 (HQQFH), 18-40 (FSCK…IRTH), 44-66 (CKCP…IRTH), and 72-82 (FSCQHCQSAFV).

This sequence belongs to the snail C2H2-type zinc-finger protein family.

Its subcellular location is the nucleus. The polypeptide is Escargot/snail protein homolog (Calliphora vicina (Blue blowfly)).